The primary structure comprises 70 residues: ATP synthase subunit c (70 aa).

The next 2 membrane-spanning stretches (helical) occupy residues 3-23 (FIAASIAAGIAAFGASIGNGM) and 47-67 (FIGVGLIEAVPILSVVVAFML).

The protein belongs to the ATPase C chain family. As to quaternary structure, F-type ATPases have 2 components, F(1) - the catalytic core - and F(0) - the membrane proton channel. F(1) has five subunits: alpha(3), beta(3), gamma(1), delta(1), epsilon(1). F(0) has three main subunits: a(1), b(2) and c(10-14). The alpha and beta chains form an alternating ring which encloses part of the gamma chain. F(1) is attached to F(0) by a central stalk formed by the gamma and epsilon chains, while a peripheral stalk is formed by the delta and b chains.

Its subcellular location is the cell membrane. Functionally, f(1)F(0) ATP synthase produces ATP from ADP in the presence of a proton or sodium gradient. F-type ATPases consist of two structural domains, F(1) containing the extramembraneous catalytic core and F(0) containing the membrane proton channel, linked together by a central stalk and a peripheral stalk. During catalysis, ATP synthesis in the catalytic domain of F(1) is coupled via a rotary mechanism of the central stalk subunits to proton translocation. Its function is as follows. Key component of the F(0) channel; it plays a direct role in translocation across the membrane. A homomeric c-ring of between 10-14 subunits forms the central stalk rotor element with the F(1) delta and epsilon subunits. The polypeptide is ATP synthase subunit c (Lacticaseibacillus casei (strain BL23) (Lactobacillus casei)).